An 868-amino-acid chain; its full sequence is Probable inorganic carbon transporter subunit DabA (868 aa).

4 residues coordinate Zn(2+): Cys-392, Asp-394, His-574, and Cys-589.

This sequence belongs to the inorganic carbon transporter (TC 9.A.2) DabA family. Forms a complex with DabB. It depends on Zn(2+) as a cofactor.

The protein localises to the cell membrane. Its function is as follows. Part of an energy-coupled inorganic carbon pump. The chain is Probable inorganic carbon transporter subunit DabA from Bacillus cereus (strain G9842).